The sequence spans 188 residues: Elongation factor P (188 aa).

Residue K34 is modified to N6-(3,6-diaminohexanoyl)-5-hydroxylysine.

It belongs to the elongation factor P family. In terms of processing, may be beta-lysylated on the epsilon-amino group of Lys-34 by the combined action of EpmA and EpmB, and then hydroxylated on the C5 position of the same residue by EpmC (if this protein is present). Lysylation is critical for the stimulatory effect of EF-P on peptide-bond formation. The lysylation moiety may extend toward the peptidyltransferase center and stabilize the terminal 3-CCA end of the tRNA. Hydroxylation of the C5 position on Lys-34 may allow additional potential stabilizing hydrogen-bond interactions with the P-tRNA.

It is found in the cytoplasm. It functions in the pathway protein biosynthesis; polypeptide chain elongation. Its function is as follows. Involved in peptide bond synthesis. Alleviates ribosome stalling that occurs when 3 or more consecutive Pro residues or the sequence PPG is present in a protein, possibly by augmenting the peptidyl transferase activity of the ribosome. Modification of Lys-34 is required for alleviation. The sequence is that of Elongation factor P from Coxiella burnetii (strain CbuK_Q154) (Coxiella burnetii (strain Q154)).